A 101-amino-acid polypeptide reads, in one-letter code: Small ribosomal subunit protein uS14A (101 aa).

Residues 31–59 are disordered; the sequence is IRSPASSPEQRVAAQSELNRQPRDASAVR.

Belongs to the universal ribosomal protein uS14 family. Part of the 30S ribosomal subunit. Contacts proteins S3 and S10.

In terms of biological role, binds 16S rRNA, required for the assembly of 30S particles and may also be responsible for determining the conformation of the 16S rRNA at the A site. This is Small ribosomal subunit protein uS14A from Mycobacteroides abscessus (strain ATCC 19977 / DSM 44196 / CCUG 20993 / CIP 104536 / JCM 13569 / NCTC 13031 / TMC 1543 / L948) (Mycobacterium abscessus).